Consider the following 320-residue polypeptide: tRNA U34 carboxymethyltransferase (320 aa).

Residues K89, W103, K108, G127, 177–178 (LE), M193, Y197, and R312 contribute to the carboxy-S-adenosyl-L-methionine site.

It belongs to the class I-like SAM-binding methyltransferase superfamily. CmoB family. Homotetramer.

The enzyme catalyses carboxy-S-adenosyl-L-methionine + 5-hydroxyuridine(34) in tRNA = 5-carboxymethoxyuridine(34) in tRNA + S-adenosyl-L-homocysteine + H(+). In terms of biological role, catalyzes carboxymethyl transfer from carboxy-S-adenosyl-L-methionine (Cx-SAM) to 5-hydroxyuridine (ho5U) to form 5-carboxymethoxyuridine (cmo5U) at position 34 in tRNAs. This is tRNA U34 carboxymethyltransferase from Stutzerimonas stutzeri (strain A1501) (Pseudomonas stutzeri).